The primary structure comprises 1905 residues: Alpha-2-macroglobulin (1905 aa).

The first 21 residues, 1–21, serve as a signal peptide directing secretion; it reads MNKQYFLSLFSTLAVALTLSG. A lipid anchor (N-palmitoyl cysteine) is attached at Cys-22. Residue Cys-22 is the site of S-diacylglycerol cysteine attachment. A cross-link (isoglutamyl cysteine thioester (Cys-Gln)) is located at residues 1438 to 1441; that stretch reads CTEQ.

It belongs to the protease inhibitor I39 (alpha-2-macroglobulin) family. Bacterial alpha-2-macroglobulin subfamily.

Its subcellular location is the cell membrane. In terms of biological role, protects the bacterial cell from host peptidases. The chain is Alpha-2-macroglobulin from Pasteurella multocida (strain Pm70).